The chain runs to 681 residues: DNA ligase (681 aa).

NAD(+)-binding positions include 44-48 (DYIYD), 94-95 (SL), and Glu-124. Lys-126 functions as the N6-AMP-lysine intermediate in the catalytic mechanism. Residues Arg-147, Glu-181, Lys-297, and Lys-321 each contribute to the NAD(+) site. Zn(2+) contacts are provided by Cys-415, Cys-418, Cys-433, and Cys-438. The 84-residue stretch at 598-681 (DETSFFYGKK…EAQAKEGTDK (84 aa)) folds into the BRCT domain.

This sequence belongs to the NAD-dependent DNA ligase family. LigA subfamily. Mg(2+) is required as a cofactor. Mn(2+) serves as cofactor.

It catalyses the reaction NAD(+) + (deoxyribonucleotide)n-3'-hydroxyl + 5'-phospho-(deoxyribonucleotide)m = (deoxyribonucleotide)n+m + AMP + beta-nicotinamide D-nucleotide.. Functionally, DNA ligase that catalyzes the formation of phosphodiester linkages between 5'-phosphoryl and 3'-hydroxyl groups in double-stranded DNA using NAD as a coenzyme and as the energy source for the reaction. It is essential for DNA replication and repair of damaged DNA. This chain is DNA ligase, found in Leuconostoc citreum (strain KM20).